Reading from the N-terminus, the 37-residue chain is Mu-agatoxin-Aa1f (37 aa).

Cystine bridges form between Cys-2-Cys-18, Cys-9-Cys-23, Cys-17-Cys-33, and Cys-25-Cys-31. Asn-37 bears the Asparagine amide mark.

It belongs to the neurotoxin 07 (Beta/delta-agtx) family. 03 (aga-4) subfamily. Aga sub-subfamily. Expressed by the venom gland.

It localises to the secreted. Its function is as follows. Insecticidal neurotoxin that induces an irreversible spastic paralysis when injected into insects. Modifies presynaptic voltage-gated sodium channels (Nav), causing them to open at the normal resting potential of the nerve. This leads to spontaneous release of neurotransmitter and repetitive action potentials in motor neurons. In Agelenopsis aperta (North American funnel-web spider), this protein is Mu-agatoxin-Aa1f.